The following is a 409-amino-acid chain: Peptidase T (409 aa).

Histidine 78 contributes to the Zn(2+) binding site. Aspartate 80 is a catalytic residue. Aspartate 140 lines the Zn(2+) pocket. Residue glutamate 174 is the Proton acceptor of the active site. 3 residues coordinate Zn(2+): glutamate 175, aspartate 197, and histidine 379.

The protein belongs to the peptidase M20B family. Requires Zn(2+) as cofactor.

Its subcellular location is the cytoplasm. It catalyses the reaction Release of the N-terminal residue from a tripeptide.. In terms of biological role, cleaves the N-terminal amino acid of tripeptides. The sequence is that of Peptidase T from Photobacterium profundum (strain SS9).